A 428-amino-acid chain; its full sequence is MLDIRLIRKEPKECEARLQKKDPSISLERLLDLDKNVRQLKADSESLLARRKALSGQIHKAKVANEDATPLIQGVNAIADQLVAFEKTLQEQEALLLDLMARLPNYPDEDVPVSPDKSGNKIIKSHGEIPTFTFPPKHHVQLNEKLQILDFKLPAKTSGSGWPAYKNEGVLLEWALLTYLLNKQQAHGFQLWLPPLLVKRDILFGSGQIPKFDGQYYRVEDGEQSLFLIPTAEVVLNGFHSQEILNEQDLPLYYAAFTPCFRREAGAGGSHERGLVRVHQFHKVEMFAFTTPEQEEIAYQKMIGIVEEILSELQLPYQLSLLSTGDMSFTAKKTIDAEVWLPGQQAFYEVSSISKCGDFQSRRSETRYRDAQGKLHFVNTLNGSGLATPRLLVAILENYQQEDGSVVIPHALRPYMNNQEILLPKTDR.

Residue 231–233 (TAE) coordinates L-serine. Residues 262 to 264 (RRE) and Val-278 each bind ATP. Glu-285 lines the L-serine pocket. 349 to 352 (EVSS) contacts ATP. L-serine is bound at residue Ser-384.

This sequence belongs to the class-II aminoacyl-tRNA synthetase family. Type-1 seryl-tRNA synthetase subfamily. In terms of assembly, homodimer. The tRNA molecule binds across the dimer.

The protein localises to the cytoplasm. The enzyme catalyses tRNA(Ser) + L-serine + ATP = L-seryl-tRNA(Ser) + AMP + diphosphate + H(+). The catalysed reaction is tRNA(Sec) + L-serine + ATP = L-seryl-tRNA(Sec) + AMP + diphosphate + H(+). The protein operates within aminoacyl-tRNA biosynthesis; selenocysteinyl-tRNA(Sec) biosynthesis; L-seryl-tRNA(Sec) from L-serine and tRNA(Sec): step 1/1. Catalyzes the attachment of serine to tRNA(Ser). Is also able to aminoacylate tRNA(Sec) with serine, to form the misacylated tRNA L-seryl-tRNA(Sec), which will be further converted into selenocysteinyl-tRNA(Sec). The chain is Serine--tRNA ligase from Chlamydia muridarum (strain MoPn / Nigg).